We begin with the raw amino-acid sequence, 74 residues long: Protein SMIM7 homolog (74 aa).

A helical membrane pass occupies residues F53–G73.

It belongs to the SMIM7 family.

It is found in the membrane. The protein is Protein SMIM7 homolog of Ixodes scapularis (Black-legged tick).